A 502-amino-acid chain; its full sequence is L-amino-acid oxidase BmooLAAO-I (502 aa).

A signal peptide spans 1-18; the sequence is MNVFFTFSLLFLAALGSC. Cys-28 and Cys-191 are oxidised to a cystine. Residues 61–62, 81–82, Arg-89, and 105–108 each bind FAD; these read MS, EA, and GPMR. Substrate is bound at residue Arg-108. A glycan (N-linked (GlcNAc...) asparagine) is linked at Asn-190. Residue His-241 coordinates substrate. Position 279 (Val-279) interacts with FAD. Cys-349 and Cys-430 are disulfide-bonded. Substrate is bound at residue Tyr-390. FAD is bound by residues Glu-475 and 482–487; that span reads GWIDST. 482 to 483 serves as a coordination point for substrate; it reads GW.

It belongs to the flavin monoamine oxidase family. FIG1 subfamily. In terms of assembly, homodimer; non-covalently linked. It depends on FAD as a cofactor. N-glycosylated. The enzymatic activity is not affected by deglycosylation. Expressed by the venom gland.

It localises to the secreted. The catalysed reaction is an L-alpha-amino acid + O2 + H2O = a 2-oxocarboxylate + H2O2 + NH4(+). It carries out the reaction L-leucine + O2 + H2O = 4-methyl-2-oxopentanoate + H2O2 + NH4(+). The enzyme catalyses L-phenylalanine + O2 + H2O = 3-phenylpyruvate + H2O2 + NH4(+). It catalyses the reaction L-tryptophan + O2 + H2O = indole-3-pyruvate + H2O2 + NH4(+). The catalysed reaction is L-methionine + O2 + H2O = 4-methylsulfanyl-2-oxobutanoate + H2O2 + NH4(+). It carries out the reaction L-isoleucine + O2 + H2O = (S)-3-methyl-2-oxopentanoate + H2O2 + NH4(+). The enzyme catalyses L-histidine + O2 + H2O = 3-(imidazol-5-yl)pyruvate + H2O2 + NH4(+). It catalyses the reaction L-tyrosine + O2 + H2O = 3-(4-hydroxyphenyl)pyruvate + H2O2 + NH4(+). The catalysed reaction is L-alanine + O2 + H2O = pyruvate + H2O2 + NH4(+). It carries out the reaction L-valine + O2 + H2O = 3-methyl-2-oxobutanoate + H2O2 + NH4(+). Its activity is regulated as follows. Its enzymatic activities is reduced when it is exposed to Ca(2+), Zn(2+), Al(3+), Cu(2+) or Ni(2+) salts. Functionally, catalyzes an oxidative deamination of predominantly hydrophobic and aromatic L-amino acids, thus producing hydrogen peroxide that may contribute to the toxicity of the venom. Shows very high activity on L-Met, and L-Leu, high activity on L-Ile, L-Phe and L-Tyr and moderate activity on L-His, L-Val and L-Ala. Exhibits diverse biological activities, such as edema, apoptosis of tumor cell lines, antibacterial activities against both Gram-positive and Gram-negative bacteria, as well as induction of platelet aggregation. Effects of snake L-amino oxidases on platelets are controversial, since they either induce aggregation or inhibit agonist-induced aggregation. These different effects are probably due to different experimental conditions. Unlike other snake venom L-amino acid oxidases, does not induce hemorrhage. It may also induce hemolysis. Has parasiticidal activities against and leishmania, as a result of enzyme-catalyzed hydrogen peroxide production. The chain is L-amino-acid oxidase BmooLAAO-I from Bothrops moojeni (Lance-headed viper).